The chain runs to 192 residues: Peptidyl-tRNA hydrolase (192 aa).

Histidine 17 is a tRNA binding site. Histidine 22 serves as the catalytic Proton acceptor. Phenylalanine 68, asparagine 70, and asparagine 116 together coordinate tRNA.

It belongs to the PTH family. Monomer.

The protein resides in the cytoplasm. It carries out the reaction an N-acyl-L-alpha-aminoacyl-tRNA + H2O = an N-acyl-L-amino acid + a tRNA + H(+). Functionally, hydrolyzes ribosome-free peptidyl-tRNAs (with 1 or more amino acids incorporated), which drop off the ribosome during protein synthesis, or as a result of ribosome stalling. Its function is as follows. Catalyzes the release of premature peptidyl moieties from peptidyl-tRNA molecules trapped in stalled 50S ribosomal subunits, and thus maintains levels of free tRNAs and 50S ribosomes. This is Peptidyl-tRNA hydrolase from Xylella fastidiosa (strain 9a5c).